Here is a 331-residue protein sequence, read N- to C-terminus: Phosphoribosylformylglycinamidine cyclo-ligase (331 aa).

This sequence belongs to the AIR synthase family.

It is found in the cytoplasm. The enzyme catalyses 2-formamido-N(1)-(5-O-phospho-beta-D-ribosyl)acetamidine + ATP = 5-amino-1-(5-phospho-beta-D-ribosyl)imidazole + ADP + phosphate + H(+). It participates in purine metabolism; IMP biosynthesis via de novo pathway; 5-amino-1-(5-phospho-D-ribosyl)imidazole from N(2)-formyl-N(1)-(5-phospho-D-ribosyl)glycinamide: step 2/2. This chain is Phosphoribosylformylglycinamidine cyclo-ligase, found in Clostridium tetani (strain Massachusetts / E88).